Here is a 346-residue protein sequence, read N- to C-terminus: F(420)H(2) dehydrogenase subunit F (346 aa).

4Fe-4S ferredoxin-type domains lie at 5 to 34 (IAEV…VKKA) and 46 to 76 (YEKG…ENEL). Residues Cys-14, Cys-17, Cys-20, Cys-24, Cys-55, Cys-58, Cys-61, and Cys-65 each contribute to the [4Fe-4S] cluster site.

As to quaternary structure, the FPO complex is composed of at least 13 different subunits. [4Fe-4S] cluster serves as cofactor. Requires FAD as cofactor.

The protein localises to the membrane. It is found in the cytoplasm. The catalysed reaction is methanophenazine + reduced coenzyme F420-(gamma-L-Glu)(n) = dihydromethanophenazine + oxidized coenzyme F420-(gamma-L-Glu)(n) + H(+). The enzyme catalyses reduced coenzyme F420-(gamma-L-Glu)(n) + 2 oxidized [2Fe-2S]-[ferredoxin] = oxidized coenzyme F420-(gamma-L-Glu)(n) + 2 reduced [2Fe-2S]-[ferredoxin] + 3 H(+). Component of the F(420)H(2) dehydrogenase (FPO complex) which is part of the energy-conserving F(420)H(2):heterodisulfide oxidoreductase system. The membrane-bound electron transfer system of the complex plays an important role in the metabolism of methylotrophic methanogens when the organisms grow on methanol or methylamines. Catalyzes the oxidation of methanophenazine to dihydromethanophenazine. It shuttles electrons from F(420)H(2), via FAD and iron-sulfur (Fe-S) centers, to methanophenazine (an electron carrier in the membrane). It couples the redox reaction to proton translocation (for every two electrons transferred, two hydrogen ions are translocated across the cytoplasmic membrane), and thus conserves the redox energy in a proton gradient. It also catalyzes the oxidation of F(420)H(2) with quinones such as 2,3-dimethyl-1,4-naphthoquinone, 2-methyl-1,4-naphthoquinone and tetramethyl-p-benzoquinone. Might have a dual function, acting as an electron input module when connected to the membrane integral Fpo complex, or as a soluble single subunit, being involved in the reoxydation of reduced ferredoxin in the cytoplasm. The chain is F(420)H(2) dehydrogenase subunit F (fpoF) from Methanosarcina mazei (strain ATCC BAA-159 / DSM 3647 / Goe1 / Go1 / JCM 11833 / OCM 88) (Methanosarcina frisia).